Reading from the N-terminus, the 174-residue chain is Crossover junction endodeoxyribonuclease RuvC (174 aa).

Residues Asp8, Glu67, and Asp139 contribute to the active site. Mg(2+) is bound by residues Asp8, Glu67, and Asp139.

Belongs to the RuvC family. In terms of assembly, homodimer which binds Holliday junction (HJ) DNA. The HJ becomes 2-fold symmetrical on binding to RuvC with unstacked arms; it has a different conformation from HJ DNA in complex with RuvA. In the full resolvosome a probable DNA-RuvA(4)-RuvB(12)-RuvC(2) complex forms which resolves the HJ. It depends on Mg(2+) as a cofactor.

Its subcellular location is the cytoplasm. The enzyme catalyses Endonucleolytic cleavage at a junction such as a reciprocal single-stranded crossover between two homologous DNA duplexes (Holliday junction).. In terms of biological role, the RuvA-RuvB-RuvC complex processes Holliday junction (HJ) DNA during genetic recombination and DNA repair. Endonuclease that resolves HJ intermediates. Cleaves cruciform DNA by making single-stranded nicks across the HJ at symmetrical positions within the homologous arms, yielding a 5'-phosphate and a 3'-hydroxyl group; requires a central core of homology in the junction. The consensus cleavage sequence is 5'-(A/T)TT(C/G)-3'. Cleavage occurs on the 3'-side of the TT dinucleotide at the point of strand exchange. HJ branch migration catalyzed by RuvA-RuvB allows RuvC to scan DNA until it finds its consensus sequence, where it cleaves and resolves the cruciform DNA. The protein is Crossover junction endodeoxyribonuclease RuvC of Pseudomonas putida (strain W619).